The primary structure comprises 356 residues: Cell division control protein 10 (356 aa).

A Septin-type G domain is found at 36 to 286; the sequence is KGFELNVLVV…NNYRKKIFEI (251 aa). Residues 46-53 form a G1 motif region; that stretch reads GRRGLGTS. Residues 46 to 53 and Thr-70 contribute to the GTP site; that span reads GRRGLGTS. The segment at 93-96 is G3 motif; it reads TYHE. A G4 motif region spans residues 163–166; the sequence is PKAD. Residues 164 to 172 and Arg-235 contribute to the GTP site; that span reads KADMYTPDE.

This sequence belongs to the TRAFAC class TrmE-Era-EngA-EngB-Septin-like GTPase superfamily. Septin GTPase family. In terms of assembly, component of the septin complex.

Its function is as follows. Septins are GTPases involved in cytokinesis. The septins localize to the site of cleavage and act as a structural scaffold that recruits different components involved in diverse processes at specific stages during the cell cycle. Septins are also involved in cell morphogenesis, chitin deposition, cell cycle regulation, cell compartmentalization and spore wall formation. This chain is Cell division control protein 10 (CDC10), found in Encephalitozoon cuniculi (strain GB-M1) (Microsporidian parasite).